The following is a 430-amino-acid chain: UDP-N-acetylmuramoylalanine--D-glutamate ligase (430 aa).

ATP is bound at residue 109 to 115 (GTDGKST).

This sequence belongs to the MurCDEF family.

It is found in the cytoplasm. It carries out the reaction UDP-N-acetyl-alpha-D-muramoyl-L-alanine + D-glutamate + ATP = UDP-N-acetyl-alpha-D-muramoyl-L-alanyl-D-glutamate + ADP + phosphate + H(+). It participates in cell wall biogenesis; peptidoglycan biosynthesis. Functionally, cell wall formation. Catalyzes the addition of glutamate to the nucleotide precursor UDP-N-acetylmuramoyl-L-alanine (UMA). The sequence is that of UDP-N-acetylmuramoylalanine--D-glutamate ligase from Thermotoga petrophila (strain ATCC BAA-488 / DSM 13995 / JCM 10881 / RKU-1).